The following is a 243-amino-acid chain: Pyridoxine 5'-phosphate synthase (243 aa).

Asn9 provides a ligand contact to 3-amino-2-oxopropyl phosphate. Position 11-12 (11-12) interacts with 1-deoxy-D-xylulose 5-phosphate; the sequence is DH. Arg20 is a 3-amino-2-oxopropyl phosphate binding site. His45 acts as the Proton acceptor in catalysis. Arg47 and His52 together coordinate 1-deoxy-D-xylulose 5-phosphate. Glu72 functions as the Proton acceptor in the catalytic mechanism. Thr102 is a binding site for 1-deoxy-D-xylulose 5-phosphate. His193 (proton donor) is an active-site residue. 3-amino-2-oxopropyl phosphate is bound by residues Gly194 and 215–216; that span reads GH.

The protein belongs to the PNP synthase family. As to quaternary structure, homooctamer; tetramer of dimers.

The protein localises to the cytoplasm. It carries out the reaction 3-amino-2-oxopropyl phosphate + 1-deoxy-D-xylulose 5-phosphate = pyridoxine 5'-phosphate + phosphate + 2 H2O + H(+). The protein operates within cofactor biosynthesis; pyridoxine 5'-phosphate biosynthesis; pyridoxine 5'-phosphate from D-erythrose 4-phosphate: step 5/5. Catalyzes the complicated ring closure reaction between the two acyclic compounds 1-deoxy-D-xylulose-5-phosphate (DXP) and 3-amino-2-oxopropyl phosphate (1-amino-acetone-3-phosphate or AAP) to form pyridoxine 5'-phosphate (PNP) and inorganic phosphate. This is Pyridoxine 5'-phosphate synthase from Pseudoalteromonas translucida (strain TAC 125).